We begin with the raw amino-acid sequence, 2360 residues long: Protein Ycf2 (2360 aa).

Disordered regions lie at residues 172–193 (SSQL…GTED), 225–255 (TEIE…EMNN), and 944–995 (KRKK…KRKE). Low complexity predominate over residues 234 to 244 (KGLSGSSSKSR). Basic and acidic residues predominate over residues 245–254 (LFTEGEKEMN). The segment covering 944–959 (KRKKKKPEKRKKKKPE) has biased composition (basic residues). A compositionally biased stretch (basic and acidic residues) spans 960–993 (KRKEKKPEKRKEKKPEKRKEKKPEKRKEKKPEKR). 1425-1432 (GSIGSGRS) contacts ATP. 3 disordered regions span residues 1499–1518 (YEDR…YEPG), 1843–2031 (LVGS…LLRP), and 2098–2214 (PAEE…DGFS). Residues 1849–2011 (TEEEVEGTEE…VEGTEDEEVE (163 aa)) show a composition bias toward acidic residues. A compositionally biased stretch (basic and acidic residues) spans 2012-2024 (GTEKDSSQFDNDR). 2 stretches are compositionally biased toward acidic residues: residues 2098–2115 (PAEE…EALE) and 2122–2197 (GEEE…ENDS).

Belongs to the Ycf2 family.

It localises to the plastid. The protein resides in the chloroplast stroma. Its function is as follows. Probable ATPase of unknown function. Its presence in a non-photosynthetic plant (Epifagus virginiana) and experiments in tobacco indicate that it has an essential function which is probably not related to photosynthesis. In Oenothera argillicola (Appalachian evening primrose), this protein is Protein Ycf2.